Reading from the N-terminus, the 233-residue chain is Putative cobalt transport protein CbiM (233 aa).

6 helical membrane-spanning segments follow: residues 9–29, 43–63, 75–95, 107–127, 138–158, and 177–197; these read PPMWCAVWWVLSGIVIAYGIV, PLVAISGAYMFILSSLKMPSV, LGAVLFGVPITAVLAAIVLLF, TLGANDFSMGIVGPAAAVIVY, TVGIFFAALFGDWLTYVTTAV, and IVIYAYTQVPLAIAEGILTVI.

Belongs to the CbiM family. As to quaternary structure, forms an energy-coupling factor (ECF) transporter complex composed of an ATP-binding protein (A component, CbiO), a transmembrane protein (T component, CbiQ) and 2 possible substrate-capture proteins (S components, CbiM and CbiN) of unknown stoichimetry.

It is found in the cell membrane. The protein operates within cofactor biosynthesis; adenosylcobalamin biosynthesis. In terms of biological role, part of the energy-coupling factor (ECF) transporter complex CbiMNOQ involved in cobalt import. The sequence is that of Putative cobalt transport protein CbiM from Methanocaldococcus jannaschii (strain ATCC 43067 / DSM 2661 / JAL-1 / JCM 10045 / NBRC 100440) (Methanococcus jannaschii).